Reading from the N-terminus, the 959-residue chain is AP2-associated protein kinase 1 (959 aa).

Met1 is modified (N-acetylmethionine). Residues Met1 to Gln11 show a composition bias toward basic and acidic residues. A disordered region spans residues Met1–Ser27. Ser14 carries the phosphoserine modification. A compositionally biased stretch (gly residues) spans Ser14–Ser27. The region spanning Val46–Leu315 is the Protein kinase domain. ATP contacts are provided by residues Leu52 to Val60 and Lys74. Asp176 serves as the catalytic Proton acceptor. Tyr234 bears the Phosphotyrosine mark. Ser235 is modified (phosphoserine). The interval Ser340–Gln385 is disordered. 2 positions are modified to phosphothreonine: Thr354 and Thr389. At Arg391 the chain carries Omega-N-methylarginine. Disordered stretches follow at residues Pro398–Pro514 and Thr578–His630. Positions Gly404 to Lys419 are enriched in polar residues. The span at Ala420–Gln435 shows a compositional bias: low complexity. Thr441 is modified (phosphothreonine). Low complexity-rich tracts occupy residues Gln444–Gln481, Gln494–Gln510, and Thr578–Thr603. Thr604 is subject to Phosphothreonine. Over residues Ile609–Thr625 the composition is skewed to polar residues. A Phosphoserine modification is found at Ser616. Position 618 is a phosphothreonine (Thr618). 4 positions are modified to phosphoserine: Ser621, Ser622, Ser635, and Ser648. A Phosphothreonine modification is found at Thr651. Disordered regions lie at residues Ser662 to Asp699, Gly727 to Ala763, Pro837 to Leu857, and Ile923 to Leu943. Positions Thr670–Asn694 are enriched in polar residues. The residue at position 729 (Ser729) is a Phosphoserine. Polar residues-rich tracts occupy residues Gln738 to Ala752 and Leu842 to Leu857. The clathrin-binding domain (CBD) stretch occupies residues Asp821–Asp958. 3 positions are modified to phosphoserine: Ser844, Ser935, and Ser936. The segment covering Gly929–Ser942 has biased composition (low complexity).

Belongs to the protein kinase superfamily. Ser/Thr protein kinase family. As to quaternary structure, interacts (via CBD domain) with clathrin. Interacts with AP-2 complex. Interacts with NUMB. Interacts with alpha-adaptin. Interacts with EPS15 isoform 2. Interacts with membrane-bound activated NOTCH1 but not with the inactive full-length form of NOTCH1. Preferentially interacts with monoubiquitinated activated NOTCH1 compared to the non-ubiquitinated form. In terms of processing, autophosphorylated.

Its subcellular location is the cell membrane. The protein localises to the membrane. It localises to the clathrin-coated pit. It is found in the presynapse. It catalyses the reaction L-seryl-[protein] + ATP = O-phospho-L-seryl-[protein] + ADP + H(+). The enzyme catalyses L-threonyl-[protein] + ATP = O-phospho-L-threonyl-[protein] + ADP + H(+). With respect to regulation, stimulated by clathrin. Regulates clathrin-mediated endocytosis by phosphorylating the AP2M1/mu2 subunit of the adaptor protein complex 2 (AP-2) which ensures high affinity binding of AP-2 to cargo membrane proteins during the initial stages of endocytosis. Preferentially, may phosphorylate substrates on threonine residues. Regulates phosphorylation of other AP-2 subunits as well as AP-2 localization and AP-2-mediated internalization of ligand complexes. Phosphorylates NUMB and regulates its cellular localization, promoting NUMB localization to endosomes. Binds to and stabilizes the activated form of NOTCH1, increases its localization in endosomes and regulates its transcriptional activity. The protein is AP2-associated protein kinase 1 (Aak1) of Mus musculus (Mouse).